The following is a 236-amino-acid chain: UPF0177 protein YaiH (236 aa).

The next 6 helical transmembrane spans lie at 16–36, 51–71, 90–110, 131–151, 180–200, and 210–230; these read YFSLFILLFAIYWFPDVILGY, ATATWIFLGNMAISLFLGILI, ILFLLFTTIVLFIIYFFTFTY, IVFPFVQFISFAICAPIFEEA, TGANPILIVYLPMSVVLTLIY, and ILVHCLMNALLPTIIVFLQTI.

Belongs to the UPF0177 family.

It localises to the cell membrane. The polypeptide is UPF0177 protein YaiH (yaiH) (Lactococcus lactis subsp. lactis (strain IL1403) (Streptococcus lactis)).